A 194-amino-acid chain; its full sequence is A-type ATP synthase subunit E (194 aa).

The protein belongs to the V-ATPase E subunit family. In terms of assembly, has multiple subunits with at least A(3), B(3), C, D, E, F, H, I and proteolipid K(x).

Its subcellular location is the cell membrane. In terms of biological role, component of the A-type ATP synthase that produces ATP from ADP in the presence of a proton gradient across the membrane. In Saccharolobus islandicus (strain M.16.27) (Sulfolobus islandicus), this protein is A-type ATP synthase subunit E.